The chain runs to 449 residues: Protein translocase subunit SecD (449 aa).

6 helical membrane passes run 6 to 26, 272 to 292, 294 to 314, 317 to 337, 379 to 399, and 401 to 421; these read GLVF…VLPT, LAVK…IAFY, LPGL…LALF, VPVT…GMAV, TFIA…GAPV, and GFAV…IFVT.

Belongs to the SecD/SecF family. SecD subfamily. As to quaternary structure, forms a complex with SecF. Part of the essential Sec protein translocation apparatus which comprises SecA, SecYEG and auxiliary proteins SecDF. Other proteins may also be involved.

It is found in the cell membrane. Its function is as follows. Part of the Sec protein translocase complex. Interacts with the SecYEG preprotein conducting channel. SecDF uses the proton motive force (PMF) to complete protein translocation after the ATP-dependent function of SecA. This is Protein translocase subunit SecD from Dehalococcoides mccartyi (strain VS).